Consider the following 955-residue polypeptide: 2-oxoglutarate dehydrogenase E1 component (955 aa).

The protein belongs to the alpha-ketoglutarate dehydrogenase family. Homodimer. Part of the 2-oxoglutarate dehydrogenase (OGDH) complex composed of E1 (2-oxoglutarate dehydrogenase), E2 (dihydrolipoamide succinyltransferase) and E3 (dihydrolipoamide dehydrogenase); the complex contains multiple copies of the three enzymatic components (E1, E2 and E3). It depends on thiamine diphosphate as a cofactor.

It carries out the reaction N(6)-[(R)-lipoyl]-L-lysyl-[protein] + 2-oxoglutarate + H(+) = N(6)-[(R)-S(8)-succinyldihydrolipoyl]-L-lysyl-[protein] + CO2. E1 component of the 2-oxoglutarate dehydrogenase (OGDH) complex which catalyzes the decarboxylation of 2-oxoglutarate, the first step in the conversion of 2-oxoglutarate to succinyl-CoA and CO(2). This Bacillus cereus (strain ATCC 14579 / DSM 31 / CCUG 7414 / JCM 2152 / NBRC 15305 / NCIMB 9373 / NCTC 2599 / NRRL B-3711) protein is 2-oxoglutarate dehydrogenase E1 component.